Here is a 198-residue protein sequence, read N- to C-terminus: Syndecan-4 (198 aa).

An N-terminal signal peptide occupies residues 1–23 (MAPACLLAPLLLLLLGGFPLVPG). Residues 24 to 145 (ESIRETEVID…QGSNIFERTE (122 aa)) lie on the Extracellular side of the membrane. Disordered regions lie at residues 42-76 (YFSG…PRPF) and 94-130 (AQPG…NKVS). Residues Ser-44, Ser-62, and Ser-64 are each glycosylated (O-linked (Xyl...) (glycosaminoglycan) serine). A compositionally biased stretch (acidic residues) spans 48–71 (PDDEDAGGSDDFELSGSGDLDDTE). The span at 102 to 118 (SEPKELEENEVIPKRAP) shows a compositional bias: basic and acidic residues. A helical transmembrane segment spans residues 146 to 170 (VLAALIVGGVVGILFAVFLILLLVY). The Cytoplasmic segment spans residues 171–198 (RMKKKDEGSYDLGKKPIYKKAPTNEFYA).

This sequence belongs to the syndecan proteoglycan family. Homodimer. Interacts with CDCP1 and SDCBP. Interacts (via its cytoplasmic domain) with GIPC (via its PDZ domain). Interacts (via its cytoplasmic domain) with NUDT16L1. Interacts with DNM2; this interaction is markedly enhanced at focal ahesion site upon induction of focal adhesions and stress-fiber formation. Post-translationally, shedding is enhanced by a number of factors such as heparanase, thrombin or EGF. Also by stress and wound healing. PMA-mediated shedding is inhibited by TIMP3. In terms of processing, O-glycosylated; contains both chondroitin sulfate and heparan sulfate. Ser-44, Ser-62 and Ser-64 can all be modified by either chondroitin sulfate or heparan sulfate, and the protein exists in forms that contain only chondroitin sulfate, only heparan sulfate and both chondroitin sulfate and heparan sulfate. In terms of tissue distribution, ubiquitous. Highest levels in liver, kidney and lung.

The protein localises to the membrane. It localises to the secreted. Its function is as follows. Cell surface proteoglycan which regulates exosome biogenesis in concert with SDCBP and PDCD6IP. This is Syndecan-4 from Mus musculus (Mouse).